A 908-amino-acid chain; its full sequence is E3 ubiquitin-protein ligase ZNF598 (908 aa).

The RING-type zinc-finger motif lies at 27 to 67; that stretch reads CVLCCGDLEATALGRCDHPVCYRCSTKMRVLCEQRYCAVCR. Residues 185 to 208 form a C2H2-type zinc finger; that stretch reads PLCKFCDERYLDNDELLKHLRRDH. Disordered stretches follow at residues 292-338, 350-441, 467-557, 569-619, and 719-744; these read SRRS…KREE, SVAA…EEDF, PGPP…TVQG, SLLA…LEAP, and PSSH…TPGL. Ser-295 carries the post-translational modification Phosphoserine. Phosphotyrosine is present on Tyr-304. The span at 313-329 shows a compositional bias: low complexity; sequence QGRAGRASGRGAQQNRR. The segment covering 358–385 has biased composition (basic and acidic residues); sequence ETQRVEDREEGSRPKKEEAAARVPEEPR. Ser-433 is subject to Phosphoserine. Residues 482-501 show a composition bias toward low complexity; it reads PALVSSAPKPSSAPSSLISA. The span at 529 to 538 shows a compositional bias: basic residues; sequence KAGKGSRGGR.

This sequence belongs to the ZNF598/HEL2 family. As to quaternary structure, interacts with the E2 ubiquitin-conjugating enzyme UBE2D3. Component of the 4EHP-GYF2 complex, at least composed of EIF4E2, GIGYF2 and ZNF598.

It is found in the cytoplasm. The protein resides in the cytosol. It catalyses the reaction S-ubiquitinyl-[E2 ubiquitin-conjugating enzyme]-L-cysteine + [acceptor protein]-L-lysine = [E2 ubiquitin-conjugating enzyme]-L-cysteine + N(6)-ubiquitinyl-[acceptor protein]-L-lysine.. The protein operates within protein modification; protein ubiquitination. Functionally, E3 ubiquitin-protein ligase that plays a key role in the ribosome quality control (RQC), a pathway that takes place when a ribosome has stalled during translation, leading to degradation of nascent peptide chains. ZNF598 is activated when ribosomes are stalled within an mRNA following translation of prematurely polyadenylated mRNAs. Acts as a ribosome collision sensor: specifically recognizes and binds collided di-ribosome, which arises when a trailing ribosome encounters a slower leading ribosome, leading to terminally arrest translation. Following binding to colliding ribosomes, mediates monoubiquitination of 40S ribosomal proteins RPS10/eS10 and RPS3/uS3, and 'Lys-63'-linked polyubiquitination of RPS20/uS10. Polyubiquitination of RPS20/uS10 promotes recruitment of the RQT (ribosome quality control trigger) complex, which drives the disassembly of stalled ribosomes, followed by degradation of nascent peptides. E3 ubiquitin-protein ligase activity is dependent on the E2 ubiquitin-conjugating enzyme UBE2D3. Also acts as an adapter that recruits the 4EHP-GYF2 complex to mRNAs. Independently of its role in RQC, may also act as a negative regulator of interferon-stimulated gene (ISG) expression. The chain is E3 ubiquitin-protein ligase ZNF598 from Mus musculus (Mouse).